A 476-amino-acid chain; its full sequence is Glutamate--tRNA ligase (476 aa).

A 'HIGH' region motif is present at residues 9–19 (PSPTGTLHLGT). The short motif at 248–252 (KLSKR) is the 'KMSKS' region element. Position 251 (K251) interacts with ATP.

It belongs to the class-I aminoacyl-tRNA synthetase family. Glutamate--tRNA ligase type 1 subfamily. As to quaternary structure, monomer.

It is found in the cytoplasm. It catalyses the reaction tRNA(Glu) + L-glutamate + ATP = L-glutamyl-tRNA(Glu) + AMP + diphosphate. Its function is as follows. Catalyzes the attachment of glutamate to tRNA(Glu) in a two-step reaction: glutamate is first activated by ATP to form Glu-AMP and then transferred to the acceptor end of tRNA(Glu). The protein is Glutamate--tRNA ligase of Prochlorococcus marinus (strain NATL2A).